Here is a 666-residue protein sequence, read N- to C-terminus: DNA mismatch repair protein MutL (666 aa).

The protein belongs to the DNA mismatch repair MutL/HexB family.

In terms of biological role, this protein is involved in the repair of mismatches in DNA. It is required for dam-dependent methyl-directed DNA mismatch repair. May act as a 'molecular matchmaker', a protein that promotes the formation of a stable complex between two or more DNA-binding proteins in an ATP-dependent manner without itself being part of a final effector complex. This is DNA mismatch repair protein MutL from Clostridium botulinum (strain Langeland / NCTC 10281 / Type F).